The following is a 360-amino-acid chain: Phospho-N-acetylmuramoyl-pentapeptide-transferase (360 aa).

10 helical membrane passes run 26 to 46 (AILG…KLIE), 74 to 94 (MGGL…GDLG), 97 to 117 (YVWV…IDDY), 132 to 152 (WKYI…YTTA), 168 to 188 (VMPQ…VGSS), 199 to 219 (GLAI…AYLS), 236 to 256 (SGEL…FLWF), 263 to 283 (VFMG…IAVL), 288 to 308 (ILLV…ILQV), and 338 to 358 (VIVR…ATLK).

Belongs to the glycosyltransferase 4 family. MraY subfamily. It depends on Mg(2+) as a cofactor.

The protein resides in the cell inner membrane. The enzyme catalyses UDP-N-acetyl-alpha-D-muramoyl-L-alanyl-gamma-D-glutamyl-meso-2,6-diaminopimeloyl-D-alanyl-D-alanine + di-trans,octa-cis-undecaprenyl phosphate = di-trans,octa-cis-undecaprenyl diphospho-N-acetyl-alpha-D-muramoyl-L-alanyl-D-glutamyl-meso-2,6-diaminopimeloyl-D-alanyl-D-alanine + UMP. It participates in cell wall biogenesis; peptidoglycan biosynthesis. In terms of biological role, catalyzes the initial step of the lipid cycle reactions in the biosynthesis of the cell wall peptidoglycan: transfers peptidoglycan precursor phospho-MurNAc-pentapeptide from UDP-MurNAc-pentapeptide onto the lipid carrier undecaprenyl phosphate, yielding undecaprenyl-pyrophosphoryl-MurNAc-pentapeptide, known as lipid I. In Shewanella sp. (strain ANA-3), this protein is Phospho-N-acetylmuramoyl-pentapeptide-transferase.